The sequence spans 267 residues: Tryptophan synthase alpha chain (267 aa).

Residues Glu-49 and Asp-60 each act as proton acceptor in the active site.

Belongs to the TrpA family. As to quaternary structure, tetramer of two alpha and two beta chains.

The catalysed reaction is (1S,2R)-1-C-(indol-3-yl)glycerol 3-phosphate + L-serine = D-glyceraldehyde 3-phosphate + L-tryptophan + H2O. The protein operates within amino-acid biosynthesis; L-tryptophan biosynthesis; L-tryptophan from chorismate: step 5/5. The alpha subunit is responsible for the aldol cleavage of indoleglycerol phosphate to indole and glyceraldehyde 3-phosphate. The polypeptide is Tryptophan synthase alpha chain (Acinetobacter baylyi (strain ATCC 33305 / BD413 / ADP1)).